Here is a 172-residue protein sequence, read N- to C-terminus: 3-hydroxydecanoyl-[acyl-carrier-protein] dehydratase (172 aa).

His-71 is an active-site residue.

The protein belongs to the thioester dehydratase family. FabA subfamily. Homodimer.

Its subcellular location is the cytoplasm. It catalyses the reaction a (3R)-hydroxyacyl-[ACP] = a (2E)-enoyl-[ACP] + H2O. The catalysed reaction is (3R)-hydroxydecanoyl-[ACP] = (2E)-decenoyl-[ACP] + H2O. It carries out the reaction (2E)-decenoyl-[ACP] = (3Z)-decenoyl-[ACP]. The protein operates within lipid metabolism; fatty acid biosynthesis. Functionally, necessary for the introduction of cis unsaturation into fatty acids. Catalyzes the dehydration of (3R)-3-hydroxydecanoyl-ACP to E-(2)-decenoyl-ACP and then its isomerization to Z-(3)-decenoyl-ACP. Can catalyze the dehydratase reaction for beta-hydroxyacyl-ACPs with saturated chain lengths up to 16:0, being most active on intermediate chain length. The chain is 3-hydroxydecanoyl-[acyl-carrier-protein] dehydratase from Enterobacter sp. (strain 638).